Reading from the N-terminus, the 132-residue chain is Small ribosomal subunit protein uS8 (132 aa).

The protein belongs to the universal ribosomal protein uS8 family. As to quaternary structure, part of the 30S ribosomal subunit. Contacts proteins S5 and S12.

Its function is as follows. One of the primary rRNA binding proteins, it binds directly to 16S rRNA central domain where it helps coordinate assembly of the platform of the 30S subunit. The protein is Small ribosomal subunit protein uS8 of Rhodococcus jostii (strain RHA1).